A 745-amino-acid chain; its full sequence is Receptor-type adenylate cyclase (745 aa).

The Extracellular segment spans residues 1 to 341; that stretch reads GELGQTDRFF…NEGALTRAQL (341 aa). Residues N15, N50, N189, and N312 are each glycosylated (N-linked (GlcNAc...) asparagine). Residues 342-362 form a helical membrane-spanning segment; sequence IGVVVGTIFAVLLLLALGIVL. Residues 363–745 lie on the Cytoplasmic side of the membrane; sequence CVALRNTRDN…GSDEVARTCV (383 aa). In terms of domain architecture, Guanylate cyclase spans 384–538; sequence TLIFTDIESS…RTPNLAARTE (155 aa). Residues D389 and D432 each coordinate Mg(2+).

The protein belongs to the adenylyl cyclase class-3 family. It depends on Mg(2+) as a cofactor.

Its subcellular location is the cell membrane. It catalyses the reaction ATP = 3',5'-cyclic AMP + diphosphate. In terms of biological role, could act as a receptor for an unknown ligand. The polypeptide is Receptor-type adenylate cyclase (Trypanosoma congolense).